Reading from the N-terminus, the 312-residue chain is Aspartate carbamoyltransferase catalytic subunit (312 aa).

Arginine 58 and threonine 59 together coordinate carbamoyl phosphate. Lysine 86 contacts L-aspartate. The carbamoyl phosphate site is built by arginine 108, histidine 136, and glutamine 139. The L-aspartate site is built by arginine 169 and arginine 223. The carbamoyl phosphate site is built by glycine 264 and proline 265.

Belongs to the aspartate/ornithine carbamoyltransferase superfamily. ATCase family. As to quaternary structure, heterododecamer (2C3:3R2) of six catalytic PyrB chains organized as two trimers (C3), and six regulatory PyrI chains organized as three dimers (R2).

The catalysed reaction is carbamoyl phosphate + L-aspartate = N-carbamoyl-L-aspartate + phosphate + H(+). It functions in the pathway pyrimidine metabolism; UMP biosynthesis via de novo pathway; (S)-dihydroorotate from bicarbonate: step 2/3. Functionally, catalyzes the condensation of carbamoyl phosphate and aspartate to form carbamoyl aspartate and inorganic phosphate, the committed step in the de novo pyrimidine nucleotide biosynthesis pathway. In Desulforamulus reducens (strain ATCC BAA-1160 / DSM 100696 / MI-1) (Desulfotomaculum reducens), this protein is Aspartate carbamoyltransferase catalytic subunit.